Consider the following 476-residue polypeptide: Adenosylhomocysteinase (476 aa).

The substrate site is built by T67, D142, and E202. Position 203-205 (203-205) interacts with NAD(+); that stretch reads TTT. Substrate contacts are provided by K232 and D236. NAD(+) contacts are provided by residues N237, 266–271, E289, N324, 345–347, and N390; these read GYGDVG and IGH.

It belongs to the adenosylhomocysteinase family. It depends on NAD(+) as a cofactor.

It localises to the cytoplasm. It carries out the reaction S-adenosyl-L-homocysteine + H2O = L-homocysteine + adenosine. Its pathway is amino-acid biosynthesis; L-homocysteine biosynthesis; L-homocysteine from S-adenosyl-L-homocysteine: step 1/1. Its function is as follows. May play a key role in the regulation of the intracellular concentration of adenosylhomocysteine. The protein is Adenosylhomocysteinase of Prochlorococcus marinus (strain MIT 9211).